A 131-amino-acid polypeptide reads, in one-letter code: D-ribose pyranase (131 aa).

Catalysis depends on His20, which acts as the Proton donor. Residues Asp28, His98, and 120–122 each bind substrate; that span reads YSN.

This sequence belongs to the RbsD / FucU family. RbsD subfamily. In terms of assembly, homodecamer.

It localises to the cytoplasm. It carries out the reaction beta-D-ribopyranose = beta-D-ribofuranose. It participates in carbohydrate metabolism; D-ribose degradation; D-ribose 5-phosphate from beta-D-ribopyranose: step 1/2. Catalyzes the interconversion of beta-pyran and beta-furan forms of D-ribose. The sequence is that of D-ribose pyranase from Lactiplantibacillus plantarum (strain ATCC BAA-793 / NCIMB 8826 / WCFS1) (Lactobacillus plantarum).